The sequence spans 294 residues: Acetyl-coenzyme A carboxylase carboxyl transferase subunit beta (294 aa).

A CoA carboxyltransferase N-terminal domain is found at 30–294; the sequence is IMTKCPECKK…PEAGGESDGE (265 aa). 4 residues coordinate Zn(2+): Cys-34, Cys-37, Cys-53, and Cys-56. Residues 34-56 form a C4-type zinc finger; sequence CPECKKIMYTKELQKNLMVCNYC.

Belongs to the AccD/PCCB family. In terms of assembly, acetyl-CoA carboxylase is a heterohexamer composed of biotin carboxyl carrier protein (AccB), biotin carboxylase (AccC) and two subunits each of ACCase subunit alpha (AccA) and ACCase subunit beta (AccD). Zn(2+) is required as a cofactor.

The protein localises to the cytoplasm. The enzyme catalyses N(6)-carboxybiotinyl-L-lysyl-[protein] + acetyl-CoA = N(6)-biotinyl-L-lysyl-[protein] + malonyl-CoA. It functions in the pathway lipid metabolism; malonyl-CoA biosynthesis; malonyl-CoA from acetyl-CoA: step 1/1. Its function is as follows. Component of the acetyl coenzyme A carboxylase (ACC) complex. Biotin carboxylase (BC) catalyzes the carboxylation of biotin on its carrier protein (BCCP) and then the CO(2) group is transferred by the transcarboxylase to acetyl-CoA to form malonyl-CoA. In Listeria innocua serovar 6a (strain ATCC BAA-680 / CLIP 11262), this protein is Acetyl-coenzyme A carboxylase carboxyl transferase subunit beta.